The sequence spans 155 residues: SsrA-binding protein (155 aa).

Belongs to the SmpB family.

Its subcellular location is the cytoplasm. In terms of biological role, required for rescue of stalled ribosomes mediated by trans-translation. Binds to transfer-messenger RNA (tmRNA), required for stable association of tmRNA with ribosomes. tmRNA and SmpB together mimic tRNA shape, replacing the anticodon stem-loop with SmpB. tmRNA is encoded by the ssrA gene; the 2 termini fold to resemble tRNA(Ala) and it encodes a 'tag peptide', a short internal open reading frame. During trans-translation Ala-aminoacylated tmRNA acts like a tRNA, entering the A-site of stalled ribosomes, displacing the stalled mRNA. The ribosome then switches to translate the ORF on the tmRNA; the nascent peptide is terminated with the 'tag peptide' encoded by the tmRNA and targeted for degradation. The ribosome is freed to recommence translation, which seems to be the essential function of trans-translation. The sequence is that of SsrA-binding protein from Bacillus cereus (strain G9842).